The following is a 270-amino-acid chain: MKLSLSPPPYADAPVVVLISGLGGSGSYWLPQLAVLEQEYQVICYDQRGTGNNPDTLEEDYSIAQMAAELHQALVAAGIERYAVVGHALGALVGMQLALDYPASLTVLVSVNGWLRINAHTRRCFQVREQLLHSGGAQAWVEAQPLFLYPADWMAARAPRLEAEDALALAHFQGKNNLLRRLNALKRADFSRHTDRIRCPVQIICASDDLLVPSACSSELHAALPDSQKMVMRYGGHACNVTDPETFNALLLNGLASLLHHREAACKELL.

This sequence belongs to the AB hydrolase superfamily. Hydrolase RutD family.

It catalyses the reaction carbamate + 2 H(+) = NH4(+) + CO2. Functionally, involved in pyrimidine catabolism. May facilitate the hydrolysis of carbamate, a reaction that can also occur spontaneously. This Escherichia coli O44:H18 (strain 042 / EAEC) protein is Putative carbamate hydrolase RutD.